The sequence spans 20 residues: Short cationic peptide-6a (20 aa).

Residue serine 20 is modified to Serine amide.

Expressed by the venom gland.

Its subcellular location is the secreted. This chain is Short cationic peptide-6a, found in Cupiennius salei (American wandering spider).